Here is an 851-residue protein sequence, read N- to C-terminus: Leucine--tRNA ligase (851 aa).

A 'HIGH' region motif is present at residues 51-61 (PYPSGDLHMGH). The short motif at 615–619 (KMSKS) is the 'KMSKS' region element. An ATP-binding site is contributed by lysine 618.

Belongs to the class-I aminoacyl-tRNA synthetase family.

Its subcellular location is the cytoplasm. The enzyme catalyses tRNA(Leu) + L-leucine + ATP = L-leucyl-tRNA(Leu) + AMP + diphosphate. The polypeptide is Leucine--tRNA ligase (Clavibacter michiganensis subsp. michiganensis (strain NCPPB 382)).